A 103-amino-acid polypeptide reads, in one-letter code: UPF0145 protein BLi01945/BL05168 (103 aa).

The protein belongs to the UPF0145 family.

This is UPF0145 protein BLi01945/BL05168 from Bacillus licheniformis (strain ATCC 14580 / DSM 13 / JCM 2505 / CCUG 7422 / NBRC 12200 / NCIMB 9375 / NCTC 10341 / NRRL NRS-1264 / Gibson 46).